The following is a 702-amino-acid chain: 1,4-alpha-glucan-branching enzyme (702 aa).

Ala2 is modified (N-acetylalanine). Residues 62 to 63 (NE) and 91 to 93 (WAP) each bind substrate. Position 107 (Trp107) interacts with (1,4-alpha-D-glucosyl)n. 118–121 (DYGK) contributes to the substrate binding site. Lys143 lines the (1,4-alpha-D-glucosyl)n pocket. The residue at position 173 (Tyr173) is a Phosphotyrosine. Residue 333-336 (EILR) coordinates substrate. The active-site Nucleophile is the Asp357. Residue Glu412 is the Proton donor of the active site.

It belongs to the glycosyl hydrolase 13 family. GlgB subfamily. As to quaternary structure, monomer.

It carries out the reaction Transfers a segment of a (1-&gt;4)-alpha-D-glucan chain to a primary hydroxy group in a similar glucan chain.. The protein operates within glycan biosynthesis; glycogen biosynthesis. In terms of biological role, glycogen-branching enzyme participates in the glycogen biosynthetic process along with glycogenin and glycogen synthase. Generates alpha-1,6-glucosidic branches from alpha-1,4-linked glucose chains, to increase solubility of the glycogen polymer. This Homo sapiens (Human) protein is 1,4-alpha-glucan-branching enzyme (GBE1).